A 222-amino-acid polypeptide reads, in one-letter code: MDLLFGRRKTPEELLRQNQRALNRAMRELDRERQKLETQEKKIIADIKKMAKQGQMDAVRIMAKDLVRTRRYVRKFVLMRANIQAVSLKIQTLKSNNSMAQAMKGVTKAMGTMNRQLKLPQIQKIMMEFERQAEIMDMKEEMMNDAIDDAMGDEEDEEESDAVVSQVLDELGLSLTDELSNLPSTGGSLSVAAGGKKAEATASALADADADLEERLKNLRRD.

Met1 bears the N-acetylmethionine mark. A coiled-coil region spans residues 12 to 53; it reads EELLRQNQRALNRAMRELDRERQKLETQEKKIIADIKKMAKQ. The segment at 56–222 is interaction with VPS4B; sequence MDAVRIMAKD…EERLKNLRRD (167 aa). Positions 179 to 188 are enriched in polar residues; that stretch reads LSNLPSTGGS. The segment at 179 to 198 is disordered; sequence LSNLPSTGGSLSVAAGGKKA. Ser184 is modified (phosphoserine). Thr185 bears the Phosphothreonine mark. Phosphoserine occurs at positions 188, 190, and 203. Residues 195–222 adopt a coiled-coil conformation; it reads GKKAEATASALADADADLEERLKNLRRD. The MIT-interacting motif signature appears at 210 to 220; the sequence is ADLEERLKNLR. An interaction with VTA1 region spans residues 217 to 222; the sequence is KNLRRD.

This sequence belongs to the SNF7 family. In terms of assembly, probable core component of the endosomal sorting required for transport complex III (ESCRT-III). ESCRT-III components are thought to multimerize to form a flat lattice on the perimeter membrane of the endosome. Several assembly forms of ESCRT-III may exist that interact and act sequentially. In vitro, heteromerizes with CHMP3 (but not CHMP4) to form helical tubular structures that expose membrane-interacting sites on the outside whereas VPS4B can associate on the inside of the tubule. Interacts with CHMP1B, CHMP2B, CHMP3, CHMP4A, CHMP4B, CHMP4C and CHMP5. Interacts with VPS4A; the interaction is direct. Interacts with VPS4B; the interaction is direct. Interacts with MITD1. Interacts with VTA1; the interaction probably involves the open conformation of CHMP2A. In terms of processing, ISGylated in a CHMP5-dependent manner. Isgylation weakens and inhibits its interactions with VPS4A and VTA1 respectively. Widely expressed. Highly expressed in brain, heart, liver and kidney.

The protein localises to the late endosome membrane. It localises to the cytoplasm. The protein resides in the nucleus envelope. Probable core component of the endosomal sorting required for transport complex III (ESCRT-III) which is involved in multivesicular bodies (MVBs) formation and sorting of endosomal cargo proteins into MVBs. MVBs contain intraluminal vesicles (ILVs) that are generated by invagination and scission from the limiting membrane of the endosome and mostly are delivered to lysosomes enabling degradation of membrane proteins, such as stimulated growth factor receptors, lysosomal enzymes and lipids. The MVB pathway appears to require the sequential function of ESCRT-O, -I,-II and -III complexes. ESCRT-III proteins mostly dissociate from the invaginating membrane before the ILV is released. The ESCRT machinery also functions in topologically equivalent membrane fission events, such as the terminal stages of cytokinesis. Together with SPAST, the ESCRT-III complex promotes nuclear envelope sealing and mitotic spindle disassembly during late anaphase. Recruited to the reforming nuclear envelope (NE) during anaphase by LEMD2. ESCRT-III proteins are believed to mediate the necessary vesicle extrusion and/or membrane fission activities, possibly in conjunction with the AAA ATPase VPS4. The sequence is that of Charged multivesicular body protein 2a (Chmp2a) from Mus musculus (Mouse).